The following is a 387-amino-acid chain: 3-ketoacyl-CoA thiolase (387 aa).

Cysteine 91 acts as the Acyl-thioester intermediate in catalysis. Residues histidine 343 and cysteine 373 each act as proton acceptor in the active site.

It belongs to the thiolase-like superfamily. Thiolase family. In terms of assembly, heterotetramer of two alpha chains (FadB) and two beta chains (FadA).

It localises to the cytoplasm. The catalysed reaction is an acyl-CoA + acetyl-CoA = a 3-oxoacyl-CoA + CoA. It functions in the pathway lipid metabolism; fatty acid beta-oxidation. Its function is as follows. Catalyzes the final step of fatty acid oxidation in which acetyl-CoA is released and the CoA ester of a fatty acid two carbons shorter is formed. The polypeptide is 3-ketoacyl-CoA thiolase (Shewanella loihica (strain ATCC BAA-1088 / PV-4)).